A 30-amino-acid chain; its full sequence is Cyclotide cycloviolacin O17 (30 aa).

Positions 1–30 (GIPCGESCVWIPCISAAIGCSCKNKVCYRN) form a cross-link, cyclopeptide (Gly-Asn). 3 cysteine pairs are disulfide-bonded: C4/C20, C8/C22, and C13/C27.

Post-translationally, this is a cyclic peptide.

Probably participates in a plant defense mechanism. This is Cyclotide cycloviolacin O17 from Psychotria brachyceras.